The sequence spans 258 residues: Pimeloyl-[acyl-carrier protein] methyl ester esterase (258 aa).

The AB hydrolase-1 domain maps to Leu16–Pro242. Substrate contacts are provided by residues Trp22, Ser82 to Leu83, and Phe143 to Gln147. Ser82 serves as the catalytic Nucleophile. Active-site residues include Asp207 and His235. His235 is a substrate binding site.

Belongs to the AB hydrolase superfamily. Carboxylesterase BioH family. In terms of assembly, monomer.

It localises to the cytoplasm. It carries out the reaction 6-carboxyhexanoyl-[ACP] methyl ester + H2O = 6-carboxyhexanoyl-[ACP] + methanol + H(+). It functions in the pathway cofactor biosynthesis; biotin biosynthesis. Functionally, the physiological role of BioH is to remove the methyl group introduced by BioC when the pimeloyl moiety is complete. It allows to synthesize pimeloyl-ACP via the fatty acid synthetic pathway through the hydrolysis of the ester bonds of pimeloyl-ACP esters. In Edwardsiella ictaluri (strain 93-146), this protein is Pimeloyl-[acyl-carrier protein] methyl ester esterase.